A 1689-amino-acid chain; its full sequence is DNA-directed RNA polymerase I subunit rpa1 (1689 aa).

C63, C66, C73, and H76 together coordinate Zn(2+). Phosphoserine is present on residues S159 and S161. Residues V269–D280 show a composition bias toward basic and acidic residues. The interval V269 to V295 is disordered. A compositionally biased stretch (acidic residues) spans E281–V295. Mg(2+) contacts are provided by D643, D645, and D647. Positions P1005–E1017 are bridging helix. The disordered stretch occupies residues R1346–E1440. 2 positions are modified to phosphoserine: S1438 and S1441.

This sequence belongs to the RNA polymerase beta' chain family. As to quaternary structure, component of the RNA polymerase I (Pol I) complex consisting of at least 13 subunits.

Its subcellular location is the nucleus. The protein resides in the nucleolus. It carries out the reaction RNA(n) + a ribonucleoside 5'-triphosphate = RNA(n+1) + diphosphate. Functionally, DNA-dependent RNA polymerase catalyzes the transcription of DNA into RNA using the four ribonucleoside triphosphates as substrates. Largest and catalytic core component of RNA polymerase I which synthesizes ribosomal RNA precursors. Forms the polymerase active center together with the second largest subunit. A single stranded DNA template strand of the promoter is positioned within the central active site cleft of Pol I. A bridging helix emanates from RPA1 and crosses the cleft near the catalytic site and is thought to promote translocation of Pol I by acting as a ratchet that moves the RNA-DNA hybrid through the active site by switching from straight to bent conformations at each step of nucleotide addition. This chain is DNA-directed RNA polymerase I subunit rpa1 (rpa1), found in Schizosaccharomyces pombe (strain 972 / ATCC 24843) (Fission yeast).